A 315-amino-acid polypeptide reads, in one-letter code: Acyl transferase (315 aa).

Active-site charge relay system residues include Ser116, Asp213, and His243.

It belongs to the LuxD family.

It participates in lipid metabolism; fatty acid reduction for biolumincescence. In terms of biological role, acyl transferase is part of the fatty acid reductase system required for aldehyde biosynthesis; it produces fatty acids for the luminescent reaction. In Photobacterium leiognathi, this protein is Acyl transferase.